The following is a 430-amino-acid chain: Dihydrolipoyllysine-residue acetyltransferase component of pyruvate dehydrogenase complex (430 aa).

Residues 2–77 (AFEFRLPDIG…VVGDVIVKID (76 aa)) form the Lipoyl-binding domain. N6-lipoyllysine is present on lysine 43. The interval 80–122 (DAEDMQFKGHDDDSSSKEEPAKEEAPAEQAPVATQTEEVDENR) is disordered. The span at 84–104 (MQFKGHDDDSSSKEEPAKEEA) shows a compositional bias: basic and acidic residues. One can recognise a Peripheral subunit-binding (PSBD) domain in the interval 125–162 (KAMPSVRKYAREKGVNIKAVSGSGKNGRITKEDVDAYL). Residues 164–200 (GGAPTASNESADSATNEEVAETPAAPAAVSLEGDFPE) are disordered. A compositionally biased stretch (low complexity) spans 177–192 (ATNEEVAETPAAPAAV). The active site involves histidine 401.

This sequence belongs to the 2-oxoacid dehydrogenase family. Forms a 24-polypeptide structural core with octahedral symmetry. It depends on (R)-lipoate as a cofactor.

The catalysed reaction is N(6)-[(R)-dihydrolipoyl]-L-lysyl-[protein] + acetyl-CoA = N(6)-[(R)-S(8)-acetyldihydrolipoyl]-L-lysyl-[protein] + CoA. In terms of biological role, the pyruvate dehydrogenase complex catalyzes the overall conversion of pyruvate to acetyl-CoA and CO(2). It contains multiple copies of three enzymatic components: pyruvate dehydrogenase (E1), dihydrolipoamide acetyltransferase (E2) and lipoamide dehydrogenase (E3). This Staphylococcus aureus protein is Dihydrolipoyllysine-residue acetyltransferase component of pyruvate dehydrogenase complex (pdhC).